Here is a 279-residue protein sequence, read N- to C-terminus: 4-hydroxy-3-methylbut-2-enyl diphosphate reductase (279 aa).

Position 12 (Cys12) interacts with [4Fe-4S] cluster. The (2E)-4-hydroxy-3-methylbut-2-enyl diphosphate site is built by His41 and His74. His41 and His74 together coordinate dimethylallyl diphosphate. Positions 41 and 74 each coordinate isopentenyl diphosphate. Residue Cys96 participates in [4Fe-4S] cluster binding. Position 124 (His124) interacts with (2E)-4-hydroxy-3-methylbut-2-enyl diphosphate. His124 lines the dimethylallyl diphosphate pocket. Isopentenyl diphosphate is bound at residue His124. Catalysis depends on Glu126, which acts as the Proton donor. Thr164 is a binding site for (2E)-4-hydroxy-3-methylbut-2-enyl diphosphate. A [4Fe-4S] cluster-binding site is contributed by Cys192. (2E)-4-hydroxy-3-methylbut-2-enyl diphosphate contacts are provided by Ser220, Ser221, Asn222, and Ser263. Dimethylallyl diphosphate is bound by residues Ser220, Ser221, Asn222, and Ser263. Residues Ser220, Ser221, Asn222, and Ser263 each contribute to the isopentenyl diphosphate site.

Belongs to the IspH family. It depends on [4Fe-4S] cluster as a cofactor.

It carries out the reaction isopentenyl diphosphate + 2 oxidized [2Fe-2S]-[ferredoxin] + H2O = (2E)-4-hydroxy-3-methylbut-2-enyl diphosphate + 2 reduced [2Fe-2S]-[ferredoxin] + 2 H(+). The catalysed reaction is dimethylallyl diphosphate + 2 oxidized [2Fe-2S]-[ferredoxin] + H2O = (2E)-4-hydroxy-3-methylbut-2-enyl diphosphate + 2 reduced [2Fe-2S]-[ferredoxin] + 2 H(+). It functions in the pathway isoprenoid biosynthesis; dimethylallyl diphosphate biosynthesis; dimethylallyl diphosphate from (2E)-4-hydroxy-3-methylbutenyl diphosphate: step 1/1. It participates in isoprenoid biosynthesis; isopentenyl diphosphate biosynthesis via DXP pathway; isopentenyl diphosphate from 1-deoxy-D-xylulose 5-phosphate: step 6/6. Its function is as follows. Catalyzes the conversion of 1-hydroxy-2-methyl-2-(E)-butenyl 4-diphosphate (HMBPP) into a mixture of isopentenyl diphosphate (IPP) and dimethylallyl diphosphate (DMAPP). Acts in the terminal step of the DOXP/MEP pathway for isoprenoid precursor biosynthesis. The polypeptide is 4-hydroxy-3-methylbut-2-enyl diphosphate reductase (Clostridioides difficile (strain 630) (Peptoclostridium difficile)).